The following is a 779-amino-acid chain: Guanyl-specific ribonuclease pgl-1 (779 aa).

The tract at residues 203–464 is involved in dimerization; that stretch reads KLLLEGVKEQ…KRIIDALEKS (262 aa). H453 serves as the catalytic Proton acceptor. 3 disordered regions span residues 563–596, 611–661, and 718–779; these read HEPQ…PTKS, RDAL…GDAT, and GRGG…GGNF. Positions 584–595 are enriched in polar residues; sequence SISTDGWDSPTK. Over residues 612–626 the composition is skewed to basic and acidic residues; that stretch reads DALKPDSVNSHRSEE. Residues 699 to 772 are RNA-binding RGG-box; that stretch reads GGGGGSYGGR…GGDRGGRGGY (74 aa).

In terms of assembly, homodimer. Interacts with pgl-2 and pgl-3; this association is not required for P-granule localization of either pgl-2 or pgl-3. Interacts with ife-1. Interacts with prmt-1; the interaction is direct. Interacts with nmad-1. Interacts with P granule components meg-1, meg-3 and meg-4. The cofactor is Does not require metal ions for catalytic activity..

It localises to the cytoplasmic granule. The catalysed reaction is [RNA] containing guanosine + H2O = an [RNA fragment]-3'-guanosine-3'-phosphate + a 5'-hydroxy-ribonucleotide-3'-[RNA fragment].. Its function is as follows. Guanyl-specific endoribonuclease which cleaves the phosphodiester bond in single-stranded RNA between the 3'-guanylic residue and the 5'-OH residue of adjacent nucleotide, resulting in the formation of a corresponding 2',3'-cyclic phosphate intermediate. Essential role in male and female postembryonic germline development; maternally provided protein maintains a population of proliferating germ cells and zygotic expression is required for correct oogenesis. Together with the P-granule component pgl-3, is involved in the formation of P-granules. Together with pgl-3, probably recruits other granule components such as pos-1, mex-3 and glh-1 to P-granules. In addition, may act redundantly with pgl-3 to protect germ cells from excessive germline apoptosis during normal oogenesis and development of the two gonadal arms. This may in part be through regulating the localization of sir-2.1 which is involved in germ cell apoptosis. May protect somatic cells from excessive apoptosis during normal development. The polypeptide is Guanyl-specific ribonuclease pgl-1 (Caenorhabditis remanei (Caenorhabditis vulgaris)).